We begin with the raw amino-acid sequence, 606 residues long: Transmembrane 9 superfamily member 1 (606 aa).

A signal peptide spans Met1–Gly27. N-linked (GlcNAc...) asparagine glycosylation is present at Asn178. A run of 4 helical transmembrane segments spans residues Leu237 to Leu257, Val310 to Leu330, Gly339 to Val359, and Val373 to Val393. Asn401 carries an N-linked (GlcNAc...) asparagine glycan. Helical transmembrane passes span Ile412 to Ile432, Val469 to Val489, Gly499 to Leu519, and Ser535 to Ala555. N-linked (GlcNAc...) asparagine glycosylation occurs at Asn559. A helical membrane pass occupies residues Phe570–Phe590.

It belongs to the nonaspanin (TM9SF) (TC 9.A.2) family.

The protein resides in the lysosome membrane. The protein localises to the cytoplasmic vesicle. It localises to the autophagosome membrane. Its function is as follows. Plays an essential role in autophagy. The protein is Transmembrane 9 superfamily member 1 (TM9SF1) of Pongo abelii (Sumatran orangutan).